The sequence spans 70 residues: Conotoxin Cl6.13 (70 aa).

The signal sequence occupies residues 1–21 (MKFPLLFISLALAAFLTRVQD). Positions 22 to 33 (ADSSVISKEKSV) are excised as a propeptide. 3 disulfide bridges follow: cysteine 41/cysteine 58, cysteine 48/cysteine 63, and cysteine 57/cysteine 68.

Expressed by the venom duct.

The protein localises to the secreted. This chain is Conotoxin Cl6.13, found in Californiconus californicus (California cone).